The following is a 229-amino-acid chain: (S)-2-haloacid dehalogenase 2 (229 aa).

Asp-10 acts as the Nucleophile in catalysis. An (S)-2-haloacid-binding positions include 11–12, Arg-41, and 118–119; these read LY and SN. The segment at 175 to 180 is important for catalytic activity; that stretch reads SSNAWD.

Belongs to the HAD-like hydrolase superfamily. S-2-haloalkanoic acid dehalogenase family.

It catalyses the reaction an (S)-2-haloacid + H2O = a (2R)-2-hydroxycarboxylate + a halide anion + H(+). The enzyme catalyses (S)-2-chloropropanoate + H2O = (R)-lactate + chloride + H(+). Its function is as follows. Catalyzes the hydrolytic dehalogenation of small (S)-2-haloalkanoic acids to yield the corresponding (R)-2-hydroxyalkanoic acids. Acts on acids of short chain lengths, C(2) to C(4), with inversion of configuration at C-2. Active with 2-halogenated carboxylic acids and converts only the S-isomer (or L-isomer) of 2-chloropropionic acid with inversion of configuration to produce R-lactate (or D-isomer). The protein is (S)-2-haloacid dehalogenase 2 of Pseudomonas sp. (strain CBS-3).